Reading from the N-terminus, the 199-residue chain is MVFQSFILGNLVYLCMKIINSVVVVGLYYGFLTTFSIGPSYLFLLRARVMDEGEEGTEKKVSATTGFIAGQLMMFISIYYAPLHLALGRPHTITVLALPYLLFHFFFWNNHKHFFDYGSTTRNEMRNLRIQCVFPNNLIFKLFNHLILPSSMLARLVNIYMFRCNNKMLFVTSSFVVCVRMLLVEWAFPLFQLFLVMKV.

3 consecutive transmembrane segments (helical) span residues 22 to 44 (VVVV…YLFL), 65 to 87 (TGFI…HLAL), and 91 to 108 (HTIT…FFFW).

It belongs to the ycf1 family.

The protein localises to the mitochondrion membrane. This is an uncharacterized protein from Arabidopsis thaliana (Mouse-ear cress).